The sequence spans 128 residues: MSKPKRERVLPDNEAKAVARMLRVSPQKLNLVAQLIRGRKAAAALADLQFSRKRIAVDVKKCLESAIANAENNHDLDVDALVVSEAHVGKGIVMKRFSPRGRGRSGRILKPFAQLTIVVRQVEAEASA.

Belongs to the universal ribosomal protein uL22 family. As to quaternary structure, part of the 50S ribosomal subunit.

This protein binds specifically to 23S rRNA; its binding is stimulated by other ribosomal proteins, e.g. L4, L17, and L20. It is important during the early stages of 50S assembly. It makes multiple contacts with different domains of the 23S rRNA in the assembled 50S subunit and ribosome. Functionally, the globular domain of the protein is located near the polypeptide exit tunnel on the outside of the subunit, while an extended beta-hairpin is found that lines the wall of the exit tunnel in the center of the 70S ribosome. The sequence is that of Large ribosomal subunit protein uL22 from Rhodopseudomonas palustris (strain HaA2).